Here is a 714-residue protein sequence, read N- to C-terminus: RanBP-type and C3HC4-type zinc finger-containing protein 1 (714 aa).

Disordered stretches follow at residues 1-23 (MSLSSGGWTRASPPAQSSSSHLG) and 152-172 (SSSTEEGRLPPPPLATQSKAP). The span at 14-23 (PAQSSSSHLG) shows a compositional bias: polar residues. In terms of domain architecture, Ubiquitin-like spans 225 to 301 (LAVVVEDASS…TAFLYLISAR (77 aa)). The RanBP2-type zinc-finger motif lies at 394–426 (RTSIQPGWACPTCTYINKPTRPGCEMCSADRPE). Residues 482 to 710 (ERVECRICYV…VNKQRCHPKC (229 aa)) are TRIAD supradomain. Positions 486, 489, 504, 506, 509, 512, 527, 536, 575, 580, 595, 598, 603, 606, 610, 615, 651, and 654 each coordinate Zn(2+). The RING-type 1 zinc finger occupies 486 to 536 (CRICYVELESGEGVLLRECLHCFCKECLRSVILMSEDPQVACPYRDESYAC). The IBR-type zinc-finger motif lies at 555-615 (QHWLQRGLSV…CKAIHEGMNC (61 aa)). The RING-type 2; atypical zinc finger occupies 651–680 (CPQCGIIVQKKEGCDWLRCTVCHTEICWVT). The active site involves Cys-664. Residues Cys-669 and Cys-672 each coordinate Zn(2+).

Belongs to the RBR family. Component of the LUBAC complex (linear ubiquitin chain assembly complex).

The enzyme catalyses [E2 ubiquitin-conjugating enzyme]-S-ubiquitinyl-L-cysteine + [acceptor protein]-L-lysine = [E2 ubiquitin-conjugating enzyme]-L-cysteine + [acceptor protein]-N(6)-ubiquitinyl-L-lysine.. Its pathway is protein modification; protein ubiquitination. Its function is as follows. Component of the LUBAC complex which conjugates linear ('Met-1'-linked) polyubiquitin chains to substrates and plays a key role in NF-kappa-B activation and regulation of inflammation. LUBAC conjugates linear polyubiquitin to ikbkg and RIPK1 and is involved in activation of the canonical NF-kappa-B and the JNK signaling pathways. Linear ubiquitination mediated by the LUBAC complex interferes with TNF-induced cell death and thereby prevents inflammation. LUBAC is recruited to the TNF-R1 signaling complex (TNF-RSC) to conjugate linear polyubiquitin to ikbkg and possibly other components contributing to the stability of the complex. The LUBAC complex is also involved in innate immunity by conjugating linear polyubiquitin chains at the surface of bacteria invading the cytosol to form the ubiquitin coat surrounding bacteria. LUBAC is not able to initiate formation of the bacterial ubiquitin coat, and can only promote formation of linear polyubiquitins on pre-existing ubiquitin. The bacterial ubiquitin coat acts as an 'eat-me' signal for xenophagy and promotes NF-kappa-B activation. Binds polyubiquitin of different linkage types. This is RanBP-type and C3HC4-type zinc finger-containing protein 1 (rbck1) from Danio rerio (Zebrafish).